Consider the following 460-residue polypeptide: Asparagine--tRNA ligase (460 aa).

Belongs to the class-II aminoacyl-tRNA synthetase family. As to quaternary structure, homodimer.

The protein resides in the cytoplasm. It catalyses the reaction tRNA(Asn) + L-asparagine + ATP = L-asparaginyl-tRNA(Asn) + AMP + diphosphate + H(+). The protein is Asparagine--tRNA ligase of Picosynechococcus sp. (strain ATCC 27264 / PCC 7002 / PR-6) (Agmenellum quadruplicatum).